Reading from the N-terminus, the 407-residue chain is uncharacterized protein (407 aa).

Coiled coils occupy residues 96-130 (TDSI…FKNE) and 287-345 (MKCY…AKTS). A compositionally biased stretch (basic and acidic residues) spans 302–317 (EKRKDNLQKQNEEAAK). The disordered stretch occupies residues 302-394 (EKRKDNLQKQ…NMDPAINESD (93 aa)). Over residues 318-331 (ITKRKNRQEKRREK) the composition is skewed to basic residues. Residues 344–370 (TSVSSIPDTSSTTTSTNSTPTNTKSNS) show a composition bias toward low complexity.

This is an uncharacterized protein from Acanthamoeba polyphaga (Amoeba).